We begin with the raw amino-acid sequence, 348 residues long: Dihydroorotase (348 aa).

Positions 14 and 16 each coordinate Zn(2+). Substrate is bound by residues 16–18 (HLR) and Asn-42. The Zn(2+) site is built by Lys-100, His-137, and His-175. Lys-100 bears the N6-carboxylysine mark. His-137 contributes to the substrate binding site. Leu-220 contacts substrate. Asp-248 is a binding site for Zn(2+). The active site involves Asp-248. The substrate site is built by His-252 and Ala-264.

The protein belongs to the metallo-dependent hydrolases superfamily. DHOase family. Class II DHOase subfamily. In terms of assembly, homodimer. It depends on Zn(2+) as a cofactor.

The catalysed reaction is (S)-dihydroorotate + H2O = N-carbamoyl-L-aspartate + H(+). The protein operates within pyrimidine metabolism; UMP biosynthesis via de novo pathway; (S)-dihydroorotate from bicarbonate: step 3/3. Catalyzes the reversible cyclization of carbamoyl aspartate to dihydroorotate. The polypeptide is Dihydroorotase (Pseudomonas fluorescens (strain Pf0-1)).